The sequence spans 334 residues: Biotin synthase (334 aa).

The region spanning 55–280 is the Radical SAM core domain; the sequence is EEIEVEGIIS…HTMLRFAGGR (226 aa). Cysteine 70, cysteine 74, and cysteine 77 together coordinate [4Fe-4S] cluster. [2Fe-2S] cluster-binding residues include cysteine 113, cysteine 205, and arginine 275.

The protein belongs to the radical SAM superfamily. Biotin synthase family. Homodimer. [4Fe-4S] cluster serves as cofactor. Requires [2Fe-2S] cluster as cofactor.

The catalysed reaction is (4R,5S)-dethiobiotin + (sulfur carrier)-SH + 2 reduced [2Fe-2S]-[ferredoxin] + 2 S-adenosyl-L-methionine = (sulfur carrier)-H + biotin + 2 5'-deoxyadenosine + 2 L-methionine + 2 oxidized [2Fe-2S]-[ferredoxin]. The protein operates within cofactor biosynthesis; biotin biosynthesis; biotin from 7,8-diaminononanoate: step 2/2. Catalyzes the conversion of dethiobiotin (DTB) to biotin by the insertion of a sulfur atom into dethiobiotin via a radical-based mechanism. The chain is Biotin synthase from Corynebacterium glutamicum (strain ATCC 13032 / DSM 20300 / JCM 1318 / BCRC 11384 / CCUG 27702 / LMG 3730 / NBRC 12168 / NCIMB 10025 / NRRL B-2784 / 534).